A 176-amino-acid chain; its full sequence is MDLPKTLHDFLLVFLGSGLILGSLGVVLLTNPIFSAFSLGLTLVCISLLYILSNSHFVAASQLLIYVGAINVLIIFGVMFMNGSEYYQDFRLWTVGDGMTLMVCTSIFISLITTIPDTSWYGIIWTTRSNQIIEQDLISTSQQIGIHLSTDFFLPFELISIILLAALIGAIVVARQ.

The next 5 membrane-spanning stretches (helical) occupy residues 10-30, 32-52, 63-83, 92-112, and 152-172; these read FLLV…VLLT, PIFS…LYIL, LLIY…FMNG, LWTV…ISLI, and FFLP…GAIV.

It belongs to the complex I subunit 6 family. As to quaternary structure, NDH is composed of at least 16 different subunits, 5 of which are encoded in the nucleus.

The protein localises to the plastid. It localises to the chloroplast thylakoid membrane. The catalysed reaction is a plastoquinone + NADH + (n+1) H(+)(in) = a plastoquinol + NAD(+) + n H(+)(out). It carries out the reaction a plastoquinone + NADPH + (n+1) H(+)(in) = a plastoquinol + NADP(+) + n H(+)(out). NDH shuttles electrons from NAD(P)H:plastoquinone, via FMN and iron-sulfur (Fe-S) centers, to quinones in the photosynthetic chain and possibly in a chloroplast respiratory chain. The immediate electron acceptor for the enzyme in this species is believed to be plastoquinone. Couples the redox reaction to proton translocation, and thus conserves the redox energy in a proton gradient. This Lotus japonicus (Lotus corniculatus var. japonicus) protein is NAD(P)H-quinone oxidoreductase subunit 6, chloroplastic (ndhG).